The sequence spans 547 residues: ATP synthase subunit alpha (547 aa).

173 to 180 contacts ATP; it reads GDRATGKT. The interval 526-547 is disordered; the sequence is PEAEALADEDVEQEQIVRQKRG. Residues 528–538 show a composition bias toward acidic residues; that stretch reads AEALADEDVEQ.

Belongs to the ATPase alpha/beta chains family. In terms of assembly, F-type ATPases have 2 components, CF(1) - the catalytic core - and CF(0) - the membrane proton channel. CF(1) has five subunits: alpha(3), beta(3), gamma(1), delta(1), epsilon(1). CF(0) has three main subunits: a(1), b(2) and c(9-12). The alpha and beta chains form an alternating ring which encloses part of the gamma chain. CF(1) is attached to CF(0) by a central stalk formed by the gamma and epsilon chains, while a peripheral stalk is formed by the delta and b chains.

It is found in the cell membrane. The enzyme catalyses ATP + H2O + 4 H(+)(in) = ADP + phosphate + 5 H(+)(out). Its function is as follows. Produces ATP from ADP in the presence of a proton gradient across the membrane. The alpha chain is a regulatory subunit. The sequence is that of ATP synthase subunit alpha from Nocardioides sp. (strain ATCC BAA-499 / JS614).